The sequence spans 1070 residues: Granule associated Rac and RHOG effector protein 1 (1070 aa).

Disordered regions lie at residues 681-771, 855-992, and 1032-1070; these read EQKA…VGAG, SQAM…STLP, and SYVQ…LPQY. The segment covering 692–702 has biased composition (pro residues); it reads PSLPVPPPPRA. Composition is skewed to low complexity over residues 719 to 742, 906 to 924, and 951 to 962; these read PQQQ…QPIG, AQGD…NGDS, and TSTLPSPPLLTT. Position 723 is a phosphoserine (serine 723). Positions 977-992 are enriched in pro residues; that stretch reads PKAPWQHPSPLPSTLP. Low complexity predominate over residues 1046 to 1058; that stretch reads HKAAPKGFKAFPG.

In terms of assembly, interacts with AGO2 and TNRC6A.

Its subcellular location is the cytoplasm. It is found in the P-body. Functionally, acts as an effector of RAC1. Associates with CCR4-NOT complex which is one of the major cellular mRNA deadenylases and is linked to various cellular processes including bulk mRNA degradation, miRNA-mediated repression, translational repression during translational initiation and general transcription regulation. May also play a role in miRNA silencing machinery. The polypeptide is Granule associated Rac and RHOG effector protein 1 (Homo sapiens (Human)).